A 370-amino-acid chain; its full sequence is Cytochrome b (370 aa).

The next 4 helical transmembrane spans lie at 25-45 (FGSMLLACLTLQLLTGFFLAV), 69-90 (WMMQNLHAIGASMFFICIYIHI), 105-125 (WLSGTTLLIMLMATAFFGYVL), and 170-190 (FFALHFILPFGIISLSSLHIL). His-75 and His-89 together coordinate heme b. The heme b site is built by His-174 and His-188. His-193 is an a ubiquinone binding site. A run of 4 helical transmembrane segments spans residues 218–238 (YKDMLMLTIMTIMLLTIVSFF), 280–300 (LGGALALTMSIMMLLTLPFTH), 312–332 (FMQLTFWTFTATFLVISWTAT), and 339–358 (FTTISQVAALMYFLFFISNP).

The protein belongs to the cytochrome b family. In terms of assembly, the cytochrome bc1 complex contains 3 respiratory subunits (MT-CYB, CYC1 and UQCRFS1), 2 core proteins (UQCRC1 and UQCRC2) and probably 6 low-molecular weight proteins. Heme b is required as a cofactor.

Its subcellular location is the mitochondrion inner membrane. Component of the ubiquinol-cytochrome c reductase complex (complex III or cytochrome b-c1 complex) that is part of the mitochondrial respiratory chain. The b-c1 complex mediates electron transfer from ubiquinol to cytochrome c. Contributes to the generation of a proton gradient across the mitochondrial membrane that is then used for ATP synthesis. This chain is Cytochrome b (MT-CYB), found in Chilabothrus strigilatus fosteri (Bimini Island boa constrictor).